The chain runs to 89 residues: MAITKERKNEIIAEYRTHESDTGSPEVQVAVLTAEINALNTHLRTHKKDFHSERGLLKMVGRRRHLLKYLRETDVQRYRELINRLGLRR.

Belongs to the universal ribosomal protein uS15 family. In terms of assembly, part of the 30S ribosomal subunit. Forms a bridge to the 50S subunit in the 70S ribosome, contacting the 23S rRNA.

Functionally, one of the primary rRNA binding proteins, it binds directly to 16S rRNA where it helps nucleate assembly of the platform of the 30S subunit by binding and bridging several RNA helices of the 16S rRNA. In terms of biological role, forms an intersubunit bridge (bridge B4) with the 23S rRNA of the 50S subunit in the ribosome. In Lysinibacillus sphaericus (strain C3-41), this protein is Small ribosomal subunit protein uS15.